The primary structure comprises 147 residues: Hemoglobin subunit beta-1 (147 aa).

A Globin domain is found at 3–147 (EWTATERTHI…VVSALGRQYH (145 aa)). Heme b-binding residues include H64 and H93.

This sequence belongs to the globin family. Hb 1 is a heterotetramer of two alpha-1 and two beta-1 chains. Hb 2 is a heterotetramer of two alpha-2 and two beta-1 chains. As to expression, red blood cells.

Functionally, involved in oxygen transport from gills to the various peripheral tissues. This is Hemoglobin subunit beta-1 (hbb1) from Boreogadus saida (Polar cod).